A 275-amino-acid polypeptide reads, in one-letter code: NH(3)-dependent NAD(+) synthetase (275 aa).

47–54 (GISGGQDS) lines the ATP pocket. Position 53 (aspartate 53) interacts with Mg(2+). Arginine 141 provides a ligand contact to deamido-NAD(+). Threonine 161 lines the ATP pocket. Glutamate 166 contacts Mg(2+). The deamido-NAD(+) site is built by lysine 174 and aspartate 181. ATP contacts are provided by lysine 190 and threonine 212. 261 to 262 (HK) serves as a coordination point for deamido-NAD(+).

The protein belongs to the NAD synthetase family. In terms of assembly, homodimer.

It carries out the reaction deamido-NAD(+) + NH4(+) + ATP = AMP + diphosphate + NAD(+) + H(+). The protein operates within cofactor biosynthesis; NAD(+) biosynthesis; NAD(+) from deamido-NAD(+) (ammonia route): step 1/1. In terms of biological role, catalyzes the ATP-dependent amidation of deamido-NAD to form NAD. Uses ammonia as a nitrogen source. This is NH(3)-dependent NAD(+) synthetase from Lacticaseibacillus paracasei (strain ATCC 334 / BCRC 17002 / CCUG 31169 / CIP 107868 / KCTC 3260 / NRRL B-441) (Lactobacillus paracasei).